Consider the following 508-residue polypeptide: Photosystem II CP47 reaction center protein (508 aa).

6 helical membrane passes run 21–36, 101–115, 140–156, 203–218, 237–252, and 457–472; these read SVHI…WAGS, IMFS…IWHW, GIHL…FGAF, IAAG…FHLS, VLSS…AFVV, and SFAL…HGAR.

It belongs to the PsbB/PsbC family. PsbB subfamily. As to quaternary structure, PSII is composed of 1 copy each of membrane proteins PsbA, PsbB, PsbC, PsbD, PsbE, PsbF, PsbH, PsbI, PsbJ, PsbK, PsbL, PsbM, PsbT, PsbX, PsbY, PsbZ, Psb30/Ycf12, at least 3 peripheral proteins of the oxygen-evolving complex and a large number of cofactors. It forms dimeric complexes. Requires Binds multiple chlorophylls. PSII binds additional chlorophylls, carotenoids and specific lipids. as cofactor.

The protein localises to the plastid. The protein resides in the chloroplast thylakoid membrane. Its function is as follows. One of the components of the core complex of photosystem II (PSII). It binds chlorophyll and helps catalyze the primary light-induced photochemical processes of PSII. PSII is a light-driven water:plastoquinone oxidoreductase, using light energy to abstract electrons from H(2)O, generating O(2) and a proton gradient subsequently used for ATP formation. This is Photosystem II CP47 reaction center protein from Guizotia abyssinica (Niger).